Consider the following 218-residue polypeptide: Putative NAD(P)H nitroreductase SH0546 (218 aa).

Belongs to the nitroreductase family. FMN is required as a cofactor.

The sequence is that of Putative NAD(P)H nitroreductase SH0546 from Staphylococcus haemolyticus (strain JCSC1435).